The primary structure comprises 170 residues: Type II secretion system protein H (170 aa).

Residues 1 to 5 constitute a propeptide, leader sequence; it reads MRQRG. Phenylalanine 6 carries the post-translational modification N-methylphenylalanine. A helical membrane pass occupies residues 6–29; the sequence is FTLLEMMLILLLMGVSAGMVLLAF.

The protein belongs to the GSP H family. In terms of assembly, type II secretion is composed of four main components: the outer membrane complex, the inner membrane complex, the cytoplasmic secretion ATPase and the periplasm-spanning pseudopilus. Interacts with core component PulG. In terms of processing, cleaved by prepilin peptidase. Post-translationally, methylated by prepilin peptidase at the amino group of the N-terminal phenylalanine once the leader sequence is cleaved by prepilin peptidase.

The protein resides in the cell inner membrane. Its function is as follows. Component of the type II secretion system required for the energy-dependent secretion of extracellular factors such as proteases and toxins from the periplasm. Part of the pseudopilus tip complex that is critical for the recognition and binding of secretion substrates. The polypeptide is Type II secretion system protein H (pulH) (Klebsiella pneumoniae).